A 109-amino-acid chain; its full sequence is Flagellar hook-basal body complex protein FliE (109 aa).

It belongs to the FliE family.

Its subcellular location is the bacterial flagellum basal body. The chain is Flagellar hook-basal body complex protein FliE from Pseudomonas aeruginosa (strain LESB58).